A 364-amino-acid chain; its full sequence is Histidinol-phosphate aminotransferase (364 aa).

Lysine 224 bears the N6-(pyridoxal phosphate)lysine mark.

It belongs to the class-II pyridoxal-phosphate-dependent aminotransferase family. Histidinol-phosphate aminotransferase subfamily. As to quaternary structure, homodimer. Pyridoxal 5'-phosphate serves as cofactor.

The enzyme catalyses L-histidinol phosphate + 2-oxoglutarate = 3-(imidazol-4-yl)-2-oxopropyl phosphate + L-glutamate. The protein operates within amino-acid biosynthesis; L-histidine biosynthesis; L-histidine from 5-phospho-alpha-D-ribose 1-diphosphate: step 7/9. The sequence is that of Histidinol-phosphate aminotransferase from Anaeromyxobacter sp. (strain Fw109-5).